Consider the following 356-residue polypeptide: Growth hormone-regulated TBC protein 1-A (356 aa).

The interval 1-29 (MEERDRTGRTGQPQHRINQPSTARERANS) is disordered. Positions 9–22 (RTGQPQHRINQPST) are enriched in polar residues. The Rab-GAP TBC domain maps to 87–277 (GVPNEHRPLV…RIWDCLFYEG (191 aa)).

Functionally, may act as a GTPase-activating protein for Rab family protein(s). The protein is Growth hormone-regulated TBC protein 1-A (grtp1a) of Danio rerio (Zebrafish).